The primary structure comprises 461 residues: D-phenylhydantoinase (461 aa).

A divalent metal cation-binding residues include His59, His61, and Lys151. Lys151 is subject to N6-carboxylysine. Tyr156 lines the substrate pocket. Residues His182 and His239 each coordinate a divalent metal cation. Ser286 provides a ligand contact to substrate. Residue Asp313 coordinates a divalent metal cation. Residue Asn335 participates in substrate binding.

Belongs to the metallo-dependent hydrolases superfamily. Hydantoinase/dihydropyrimidinase family. In terms of assembly, homotetramer. Requires a divalent metal cation as cofactor. In terms of processing, carboxylation allows a single lysine to coordinate two divalent metal cations.

The enzyme catalyses D-5-phenylhydantoin + H2O = N-carbamoyl-D-phenylglycine + H(+). In terms of biological role, catalyzes the stereospecific hydrolysis of the cyclic amide bond of D-hydantoin derivatives with an aromatic side chains at the 5'-position. Has no activity on dihydropyrimidines. The physiological function is unknown. This chain is D-phenylhydantoinase, found in Escherichia coli O81 (strain ED1a).